The chain runs to 128 residues: Large ribosomal subunit protein bL17 (128 aa).

It belongs to the bacterial ribosomal protein bL17 family. In terms of assembly, part of the 50S ribosomal subunit. Contacts protein L32.

This is Large ribosomal subunit protein bL17 from Haemophilus influenzae (strain 86-028NP).